The primary structure comprises 129 residues: Protein BEX2 (129 aa).

The tract at residues 1–38 is disordered; sequence MESKVEQGVKNLNMENDHQEKEEKEEKPQDANKREPVV. Over residues 15–36 the composition is skewed to basic and acidic residues; sequence ENDHQEKEEKEEKPQDANKREP. At Arg51 the chain carries Omega-N-methylarginine. The tract at residues 108-129 is disordered; sequence SLRAVSTDPPHHDHHDEFCLMP. Residues 116-129 show a composition bias toward basic and acidic residues; sequence PPHHDHHDEFCLMP. Residues 118–122 are his cluster; sequence HHDHH. Residue Cys126 participates in Zn(2+) binding.

Belongs to the BEX family. In terms of assembly, interacts with LMO2, possibly leading to regulate the transcriptional activity of a DNA-binding complex containing LMO2. Interacts with OMP.

It localises to the nucleus. Its subcellular location is the cytoplasm. Functionally, regulator of mitochondrial apoptosis and G1 cell cycle. Regulates the level of PP2A regulatory subunit B and PP2A phosphatase activity. In absence of reductive stress, acts as a pseudosubstrate for the CRL2(FEM1B) complex: associates with FEM1B via zinc, thereby preventing association between FEM1B and its substrates. The protein is Protein BEX2 (Bex2) of Rattus norvegicus (Rat).